A 304-amino-acid polypeptide reads, in one-letter code: Coenzyme PQQ synthesis protein B (304 aa).

The protein belongs to the PqqB family.

Its pathway is cofactor biosynthesis; pyrroloquinoline quinone biosynthesis. Its function is as follows. May be involved in the transport of PQQ or its precursor to the periplasm. This is Coenzyme PQQ synthesis protein B from Pseudomonas aeruginosa (strain UCBPP-PA14).